A 216-amino-acid chain; its full sequence is MTIVHFVGSLFFFFFFSYIFFYNDHGLYTWGCNFAMESPSPTSSPSLPTRFTPCPVAVLPSSSSPSWSFSTSCMPESTCSEISTSFFDTFNSSSDLFRSRICLLSDNRSFSIFSDSFTYFSFSISSCVSRSHSFVNLLSNFSMVSLTNSWIIAWLSSMYFSEISLDLSETLPNLSSPCSSVWTASFTHSINFEPDTLPSRLSPPLPFSVEPTTSRM.

Residues 1–21 (MTIVHFVGSLFFFFFFSYIFF) form a helical membrane-spanning segment.

The protein resides in the membrane. This is an uncharacterized protein from Saccharomyces cerevisiae (strain ATCC 204508 / S288c) (Baker's yeast).